The primary structure comprises 398 residues: Tyrosine--tRNA ligase (398 aa).

Positions 48 to 57 (PTGADIHLGH) match the 'HIGH' region motif. Positions 235–239 (KMSKS) match the 'KMSKS' region motif. ATP is bound at residue lysine 238. The S4 RNA-binding domain maps to 334–398 (VKLAYLLGAT…GKNKFMRLVP (65 aa)).

Belongs to the class-I aminoacyl-tRNA synthetase family. TyrS type 2 subfamily. In terms of assembly, homodimer.

It is found in the cytoplasm. The enzyme catalyses tRNA(Tyr) + L-tyrosine + ATP = L-tyrosyl-tRNA(Tyr) + AMP + diphosphate + H(+). Functionally, catalyzes the attachment of tyrosine to tRNA(Tyr) in a two-step reaction: tyrosine is first activated by ATP to form Tyr-AMP and then transferred to the acceptor end of tRNA(Tyr). The sequence is that of Tyrosine--tRNA ligase from Nostoc sp. (strain PCC 7120 / SAG 25.82 / UTEX 2576).